The following is a 298-amino-acid chain: O-glycoside alpha-1,2-mannosyltransferase homolog 6 (298 aa).

Glu-220 serves as the catalytic Nucleophile.

The protein belongs to the glycosyltransferase 15 family.

Its subcellular location is the cytoplasm. The protein localises to the nucleus. In terms of biological role, probable mannosyltransferase involved in O-glycosylation of cell wall and secreted proteins. The protein is O-glycoside alpha-1,2-mannosyltransferase homolog 6 (omh6) of Schizosaccharomyces pombe (strain 972 / ATCC 24843) (Fission yeast).